We begin with the raw amino-acid sequence, 365 residues long: P43 5S RNA-binding protein (365 aa).

9 consecutive C2H2-type zinc fingers follow at residues phenylalanine 15 to histidine 39, tryptophan 45 to histidine 69, histidine 75 to histidine 100, leucine 106 to histidine 130, serine 136 to histidine 160, tyrosine 163 to histidine 187, leucine 191 to histidine 213, leucine 220 to histidine 245, and histidine 251 to histidine 275.

In terms of assembly, the 42S RNP particle comprises four subunits each of which contains one molecule of 5S RNA, three molecules of tRNA, two molecules of p50 (EF1-alpha) and one molecule of the 5S RNA binding protein 43.

Its function is as follows. p43 is a 5S RNA binding protein which is a major constituent of oocytes and comprises part of a 42S ribonucleoprotein storage particle. The polypeptide is P43 5S RNA-binding protein (Xenopus borealis (Kenyan clawed frog)).